A 245-amino-acid polypeptide reads, in one-letter code: Ribosomal RNA small subunit methyltransferase G (245 aa).

Residues Gly85, Phe90, 108–110, 136–137, and Arg155 each bind S-adenosyl-L-methionine; these read DST and AE.

This sequence belongs to the methyltransferase superfamily. RNA methyltransferase RsmG family.

The protein localises to the cytoplasm. In terms of biological role, specifically methylates the N7 position of a guanine in 16S rRNA. In Trichormus variabilis (strain ATCC 29413 / PCC 7937) (Anabaena variabilis), this protein is Ribosomal RNA small subunit methyltransferase G.